The primary structure comprises 665 residues: UvrABC system protein B (665 aa).

The Helicase ATP-binding domain maps to 31-414 (DGVKGGEKAQ…EMEQTETVVQ (384 aa)). 44–51 (GATGTGKT) lines the ATP pocket. A Beta-hairpin motif is present at residues 97 to 120 (YYDYYQPEAYVPSSDTYIEKDSSI). Positions 435–601 (QIDDLVGEIH…TIIKEIRDLI (167 aa)) constitute a Helicase C-terminal domain. In terms of domain architecture, UVR spans 629-664 (ADLLMKLEREMKDAAKALDFETAATLRDTILELKAA).

This sequence belongs to the UvrB family. In terms of assembly, forms a heterotetramer with UvrA during the search for lesions. Interacts with UvrC in an incision complex.

It localises to the cytoplasm. Functionally, the UvrABC repair system catalyzes the recognition and processing of DNA lesions. A damage recognition complex composed of 2 UvrA and 2 UvrB subunits scans DNA for abnormalities. Upon binding of the UvrA(2)B(2) complex to a putative damaged site, the DNA wraps around one UvrB monomer. DNA wrap is dependent on ATP binding by UvrB and probably causes local melting of the DNA helix, facilitating insertion of UvrB beta-hairpin between the DNA strands. Then UvrB probes one DNA strand for the presence of a lesion. If a lesion is found the UvrA subunits dissociate and the UvrB-DNA preincision complex is formed. This complex is subsequently bound by UvrC and the second UvrB is released. If no lesion is found, the DNA wraps around the other UvrB subunit that will check the other stand for damage. This Enterococcus faecalis (strain ATCC 700802 / V583) protein is UvrABC system protein B.